We begin with the raw amino-acid sequence, 470 residues long: Argininosuccinate lyase (470 aa).

Belongs to the lyase 1 family. Argininosuccinate lyase subfamily.

It is found in the cytoplasm. The catalysed reaction is 2-(N(omega)-L-arginino)succinate = fumarate + L-arginine. The protein operates within amino-acid biosynthesis; L-arginine biosynthesis; L-arginine from L-ornithine and carbamoyl phosphate: step 3/3. In Prochlorococcus marinus (strain MIT 9303), this protein is Argininosuccinate lyase.